The following is a 100-amino-acid chain: Apolipoprotein C-II (100 aa).

A signal peptide spans Met1 to Ala22. The segment at Ser66 to Met74 is lipid binding. The tract at residues Ser78–Glu100 is lipoprotein lipase cofactor.

This sequence belongs to the apolipoprotein C2 family. Proapolipoprotein C-II is synthesized as a sialic acid containing glycoprotein which is subsequently desialylated prior to its proteolytic processing. Post-translationally, proapolipoprotein C-II, the major form found in plasma undergoes proteolytic cleavage of its N-terminal hexapeptide to generate the mature form apolipoprotein C-II, which occurs as the minor form in plasma.

The protein localises to the secreted. Functionally, component of chylomicrons, very low-density lipoproteins (VLDL), low-density lipoproteins (LDL), and high-density lipoproteins (HDL) in plasma. Plays an important role in lipoprotein metabolism as an activator of lipoprotein lipase. The sequence is that of Apolipoprotein C-II (APOC2) from Myodes glareolus (Bank vole).